A 242-amino-acid chain; its full sequence is Small ribosomal subunit protein uS5 (242 aa).

Residues 1–14 (MADENSTGPGNQPE) show a composition bias toward polar residues. The segment at 1–65 (MADENSTGPG…DRRPRDEDGG (65 aa)) is disordered. The segment covering 41 to 65 (DGGRGGRDGGRGRRDDRRPRDEDGG) has biased composition (basic and acidic residues). The region spanning 68 to 131 (LIEKLVHINR…AAAKKAMIRV (64 aa)) is the S5 DRBM domain. The segment at 204–242 (EQTSPKSVAQRRGKKVSDLIKRGGASDRAAEAEAAAVTE) is disordered. Basic and acidic residues predominate over residues 218–234 (KVSDLIKRGGASDRAAE).

It belongs to the universal ribosomal protein uS5 family. In terms of assembly, part of the 30S ribosomal subunit. Contacts proteins S4 and S8.

With S4 and S12 plays an important role in translational accuracy. In terms of biological role, located at the back of the 30S subunit body where it stabilizes the conformation of the head with respect to the body. The sequence is that of Small ribosomal subunit protein uS5 from Sphingopyxis alaskensis (strain DSM 13593 / LMG 18877 / RB2256) (Sphingomonas alaskensis).